The sequence spans 511 residues: Cytochrome P450 93B2 (511 aa).

The chain crosses the membrane as a helical span at residues 4–24; the sequence is LQLIFLLFFFPTLLFLYCLPY. A heme-binding site is contributed by Cys-447.

This sequence belongs to the cytochrome P450 family. It depends on heme as a cofactor.

It localises to the membrane. The enzyme catalyses a flavanone + reduced [NADPH--hemoprotein reductase] + O2 = a flavone + oxidized [NADPH--hemoprotein reductase] + 2 H2O + H(+). Its pathway is secondary metabolite biosynthesis; flavonoid biosynthesis. Functionally, functions as a flavone synthase II (FNSII) that catalyzes the direct conversion of flavanones to flavones. In vitro, can convert liquiritigenin, naringenin and eriodictyol to 7,4'-dihydroxyflavone, apigenin and luteolin, respectively. This chain is Cytochrome P450 93B2, found in Gerbera hybrida (Daisy).